Consider the following 449-residue polypeptide: Glycine receptor subunit alpha-2 (449 aa).

The signal sequence occupies residues 1–27 (MTRPSVKLLTTLLACLMEMLNFRVSSG). The Extracellular segment spans residues 28 to 255 (KDPDLLSSSS…FHLERQMGYY (228 aa)). N-linked (GlcNAc...) asparagine glycosylation occurs at Asn70. Glycine contacts are provided by Arg97 and Ser161. Arg97 lines the strychnine pocket. Residues Cys170 and Cys184 are joined by a disulfide bond. Glu224 and Asp226 together coordinate Zn(2+). Residues Cys230 and Cys241 are joined by a disulfide bond. Residue Thr236 participates in glycine binding. His247 contacts Zn(2+). The helical transmembrane segment at 256–276 (LIQMYIPSLLIVILSWVSFWI) threads the bilayer. Residues 277–282 (NMDAAP) lie on the Cytoplasmic side of the membrane. Residues 283-302 (ARVALGITTVLTMTTQSSGS) traverse the membrane as a helical segment. Over 303–313 (RASLPKVSYVK) the chain is Extracellular. A helical transmembrane segment spans residues 314–334 (AIDIWMAVCLLFVFAALLEYA). Topologically, residues 335 to 420 (GVNFVSRQQK…RAKRIDTISR (86 aa)) are cytoplasmic. Residues 421–441 (AAFPLAFLIFNVFYWITYKII) traverse the membrane as a helical segment. At 442–449 (RHESARKD) the chain is on the extracellular side.

The protein belongs to the ligand-gated ion channel (TC 1.A.9) family.

It localises to the postsynaptic cell membrane. It is found in the synapse. Its subcellular location is the cell membrane. The protein localises to the cell projection. It catalyses the reaction chloride(in) = chloride(out). Its activity is regulated as follows. Channel opening is triggered by extracellular glycine. Channel opening is also triggered by taurine and beta-alanine. Inhibited by strychnine. In terms of biological role, subunit of heteromeric glycine-gated chloride channels. Plays a role in synaptic plasticity. Contributes to the generation of inhibitory postsynaptic currents, and is involved in the down-regulation of neuronal excitability. This chain is Glycine receptor subunit alpha-2 (glra2), found in Danio rerio (Zebrafish).